A 514-amino-acid polypeptide reads, in one-letter code: 2,3-bisphosphoglycerate-independent phosphoglycerate mutase (514 aa).

The Mn(2+) site is built by aspartate 13 and serine 63. Catalysis depends on serine 63, which acts as the Phosphoserine intermediate. Substrate contacts are provided by residues histidine 124, 154–155 (RD), arginine 186, arginine 192, 258–261 (RADR), and lysine 332. Mn(2+)-binding residues include aspartate 399, histidine 403, aspartate 440, histidine 441, and histidine 459.

It belongs to the BPG-independent phosphoglycerate mutase family. In terms of assembly, monomer. Mn(2+) serves as cofactor.

It carries out the reaction (2R)-2-phosphoglycerate = (2R)-3-phosphoglycerate. It functions in the pathway carbohydrate degradation; glycolysis; pyruvate from D-glyceraldehyde 3-phosphate: step 3/5. Functionally, catalyzes the interconversion of 2-phosphoglycerate and 3-phosphoglycerate. This chain is 2,3-bisphosphoglycerate-independent phosphoglycerate mutase, found in Legionella pneumophila (strain Corby).